A 415-amino-acid chain; its full sequence is DNA double-strand break repair protein Mre11 (415 aa).

Asp10, His12, Asp51, and Asn86 together coordinate Mn(2+). His87 serves as the catalytic Proton donor. Mn(2+) contacts are provided by His174, His208, and His210.

It belongs to the MRE11/RAD32 family. As to quaternary structure, homodimer. Forms a heterotetramer composed of two Mre11 subunits and two Rad50 subunits. The cofactor is Mn(2+).

Nuclease activity is regulated by Rad50. Its function is as follows. Part of the Rad50/Mre11 complex, which is involved in the early steps of DNA double-strand break (DSB) repair. The complex may facilitate opening of the processed DNA ends to aid in the recruitment of HerA and NurA. Mre11 binds to DSB ends and has both double-stranded 3'-5' exonuclease activity and single-stranded endonuclease activity. The chain is DNA double-strand break repair protein Mre11 from Pyrococcus abyssi (strain GE5 / Orsay).